A 403-amino-acid chain; its full sequence is Putative glutamate--cysteine ligase 2 (403 aa).

A disordered region spans residues 370–403 (ESAAQRRAPQAARRRIRASSEPLGPMSMWPERLH).

Belongs to the glutamate--cysteine ligase type 2 family. YbdK subfamily.

The enzyme catalyses L-cysteine + L-glutamate + ATP = gamma-L-glutamyl-L-cysteine + ADP + phosphate + H(+). In terms of biological role, ATP-dependent carboxylate-amine ligase which exhibits weak glutamate--cysteine ligase activity. The protein is Putative glutamate--cysteine ligase 2 of Bordetella avium (strain 197N).